The following is a 261-amino-acid chain: Polyamine aminopropyltransferase (261 aa).

Positions 1 to 219 (MHPFRRRVRP…AVMAFRQSPS (219 aa)) constitute a PABS domain. S-methyl-5'-thioadenosine is bound by residues Asp96 and 124-125 (DG). Asp142 functions as the Proton acceptor in the catalytic mechanism.

The protein belongs to the spermidine/spermine synthase family. In terms of assembly, homodimer or homotetramer.

The protein localises to the cytoplasm. The catalysed reaction is S-adenosyl 3-(methylsulfanyl)propylamine + putrescine = S-methyl-5'-thioadenosine + spermidine + H(+). Its pathway is amine and polyamine biosynthesis; spermidine biosynthesis; spermidine from putrescine: step 1/1. Catalyzes the irreversible transfer of a propylamine group from the amino donor S-adenosylmethioninamine (decarboxy-AdoMet) to putrescine (1,4-diaminobutane) to yield spermidine. The protein is Polyamine aminopropyltransferase of Chromobacterium violaceum (strain ATCC 12472 / DSM 30191 / JCM 1249 / CCUG 213 / NBRC 12614 / NCIMB 9131 / NCTC 9757 / MK).